Reading from the N-terminus, the 153-residue chain is Transcriptional repressor NrdR (153 aa).

A zinc finger spans residues 3–34 (CPSCSHNGTRVLDSRPVDEGRSIRRRRECESC). An ATP-cone domain is found at 49-139 (LIVVKKEGTR…VYRQFKDLNV (91 aa)).

This sequence belongs to the NrdR family. Zn(2+) serves as cofactor.

Functionally, negatively regulates transcription of bacterial ribonucleotide reductase nrd genes and operons by binding to NrdR-boxes. The polypeptide is Transcriptional repressor NrdR (Bacillus anthracis (strain A0248)).